An 83-amino-acid polypeptide reads, in one-letter code: Gas vesicle protein G1 (83 aa).

It belongs to the gas vesicle GvpG family. In terms of assembly, gvpF to GvpM interact with each other in vitro, and may form multi-subunit complex(es). Might interact with GvpA1.

The protein resides in the gas vesicle. Its function is as follows. Proteins GvpF to GvpM might be involved in nucleating gas vesicle formation. A minor component of the gas vesicle. Gas vesicles are hollow, gas filled proteinaceous nanostructures found in several microbial planktonic microorganisms. They allow positioning of halobacteria at the optimal depth for growth in the poorly aerated, shallow brine pools of their habitat. In terms of biological role, expression of a 9.5 kb p-vac DNA fragment containing 2 divergently transcribed regions (gvpD-gvpE-gvpF-gvpG-gvpH-gvpI-gvpJ-gvpK-gvpL-gvpM and gvpA-gvpC-gvpN-gvpO) allows H.volcanii to produce gas vesicles. A minimal gas vesicle can be made in H.volcanii by gvpA1-gvpO1 plus gvpF1-gvpG1-gvpJ1-gvpK1-gvpL1-gvpM1; lack of enough GvpJ1 prevents formation. A similar region restores gas vesicle production in H.halobium without the p-vac locus, but it still has the c-vac locus. This is Gas vesicle protein G1 (gvpG11) from Halobacterium salinarum (strain ATCC 700922 / JCM 11081 / NRC-1) (Halobacterium halobium).